An 813-amino-acid chain; its full sequence is Leucine--tRNA ligase (813 aa).

The 'HIGH' region signature appears at 41–51; it reads PYPSGTLHMGH. Positions 575–579 match the 'KMSKS' region motif; that stretch reads KMSKS. Lys578 lines the ATP pocket.

This sequence belongs to the class-I aminoacyl-tRNA synthetase family.

It is found in the cytoplasm. It carries out the reaction tRNA(Leu) + L-leucine + ATP = L-leucyl-tRNA(Leu) + AMP + diphosphate. The protein is Leucine--tRNA ligase of Francisella tularensis subsp. tularensis (strain FSC 198).